The primary structure comprises 120 residues: Large ribosomal subunit protein uL18 (120 aa).

It belongs to the universal ribosomal protein uL18 family. In terms of assembly, part of the 50S ribosomal subunit; part of the 5S rRNA/L5/L18/L25 subcomplex. Contacts the 5S and 23S rRNAs.

Its function is as follows. This is one of the proteins that bind and probably mediate the attachment of the 5S RNA into the large ribosomal subunit, where it forms part of the central protuberance. This Rhizobium etli (strain CIAT 652) protein is Large ribosomal subunit protein uL18.